A 407-amino-acid polypeptide reads, in one-letter code: Argininosuccinate synthase (407 aa).

ATP contacts are provided by residues 16 to 24 (AYSGGLDTS) and A44. 2 residues coordinate L-citrulline: Y96 and S101. G126 is a binding site for ATP. L-aspartate is bound by residues T128, N132, and D133. N132 serves as a coordination point for L-citrulline. Positions 136, 185, 194, 270, and 282 each coordinate L-citrulline.

It belongs to the argininosuccinate synthase family. Type 1 subfamily. As to quaternary structure, homotetramer.

It is found in the cytoplasm. The catalysed reaction is L-citrulline + L-aspartate + ATP = 2-(N(omega)-L-arginino)succinate + AMP + diphosphate + H(+). It functions in the pathway amino-acid biosynthesis; L-arginine biosynthesis; L-arginine from L-ornithine and carbamoyl phosphate: step 2/3. The polypeptide is Argininosuccinate synthase (Shewanella sp. (strain ANA-3)).